We begin with the raw amino-acid sequence, 145 residues long: Large ribosomal subunit protein uL11 (145 aa).

Belongs to the universal ribosomal protein uL11 family. In terms of assembly, part of the ribosomal stalk of the 50S ribosomal subunit. Interacts with L10 and the large rRNA to form the base of the stalk. L10 forms an elongated spine to which L12 dimers bind in a sequential fashion forming a multimeric L10(L12)X complex. Post-translationally, one or more lysine residues are methylated.

Functionally, forms part of the ribosomal stalk which helps the ribosome interact with GTP-bound translation factors. This Rickettsia canadensis (strain McKiel) protein is Large ribosomal subunit protein uL11.